An 807-amino-acid polypeptide reads, in one-letter code: MSAQQQCDLTSYDAMYYLQTGDLQLAVNLFISPNSSFSYSGNSGQSILQSLGTIIIWVYKVNGQIHIYTIGWQPIYYSLQNGCRANIYFRLWALIQIQGAWLASEIMNMPVTLKNTGGQFVGTFIPLHLLGFAIADFPSLSSGSQGYTHMLMSQTDGSIKLLPSAPGVLPYFITVGFQCRAGAYVLKQPCPNCIFVRLCVPTSNGIPYEVLMLICLLIYAGCYASYSDILGKNGLSTVGAGVNAKVPVTAIVYFDTQQYIQQNVVSQLNVTIQLYALIWVGISTTNFVILPEISQILKMPSGLILNIPVPFQAYPTPTVAIPRILTLITCCGTPYIYNQYFPCSFDKASTVTTECGVPLVAYPTISQMQPIAGSNVAFLLSNQSADFADLLSLNYGLLNLTTQQKVSLANQYSYTMTQCKKEVIRGTYYEECVKNVSSNLNQYSSQPASPQPNIPVDEILIGVGAVALIVIGTVALVLTGGASAPVSAGLDVAGAEALGSLLLDNGALSLSSLQEEGLANTLMQTSVSDSFESEDEEIVQNEPNSAKLVVFTNTNQPFTLTVTGTDITGTVTIQSGIADFDLTITLPSGVSVPISVPAGVIDDFTDDQGYTIYEQEDQPVRLKYSDGQVIYNTISQLGKKLDGFFSLLKKLLKYIAVALLSAIASILVNMFLFMPLVASIMTSIIQSGQGVSSGGTVTVTGQSTSTTLSTALSDIASTFGQIPQILEEIPVALASAYLITDLLTDFFGDLWRGFSKNLLPNKAVNVNIPQPLEVDLKSRLKAYSEAVISKNDKGEWVINKKLRGRFS.

5 helical membrane-spanning segments follow: residues 210 to 230 (VLML…SDIL), 234 to 254 (GLST…IVYF), 270 to 290 (VTIQ…FVIL), 459 to 479 (ILIG…LVLT), and 657 to 677 (VALL…MPLV).

The protein resides in the host membrane. This Acidianus filamentous virus 1 (isolate United States/Yellowstone) (AFV-1) protein is Putative transmembrane protein ORF807.